The following is a 557-amino-acid chain: Urocanate hydratase (557 aa).

Residues 52-53 (GG), Q130, 176-178 (GMG), E196, R201, 242-243 (NA), 263-267 (QTSAH), 273-274 (YL), and Y322 contribute to the NAD(+) site. The active site involves C410. Position 492 (G492) interacts with NAD(+).

It belongs to the urocanase family. NAD(+) serves as cofactor.

The protein resides in the cytoplasm. It catalyses the reaction 4-imidazolone-5-propanoate = trans-urocanate + H2O. It functions in the pathway amino-acid degradation; L-histidine degradation into L-glutamate; N-formimidoyl-L-glutamate from L-histidine: step 2/3. Its function is as follows. Catalyzes the conversion of urocanate to 4-imidazolone-5-propionate. The sequence is that of Urocanate hydratase from Pseudoalteromonas translucida (strain TAC 125).